We begin with the raw amino-acid sequence, 279 residues long: Rhamnulose-1-phosphate aldolase (279 aa).

E115 is an active-site residue. Positions 138, 140, and 209 each coordinate Zn(2+).

The protein belongs to the aldolase class II family. RhaD subfamily. Requires Zn(2+) as cofactor.

It is found in the cytoplasm. It carries out the reaction L-rhamnulose 1-phosphate = (S)-lactaldehyde + dihydroxyacetone phosphate. Its pathway is carbohydrate degradation; L-rhamnose degradation; glycerone phosphate from L-rhamnose: step 3/3. In terms of biological role, catalyzes the reversible cleavage of L-rhamnulose-1-phosphate to dihydroxyacetone phosphate (DHAP) and L-lactaldehyde. This chain is Rhamnulose-1-phosphate aldolase, found in Enterococcus faecalis (strain ATCC 700802 / V583).